The primary structure comprises 69 residues: MNVKESEPAQADLQASWMCAECGYIYDPAEGNLETNIRPGMPFDKLPDDWSCPVCNHPKNQFTKFISQL.

The Rubredoxin-like domain occupies 14–69 (QASWMCAECGYIYDPAEGNLETNIRPGMPFDKLPDDWSCPVCNHPKNQFTKFISQL). 4 residues coordinate Fe cation: cysteine 19, cysteine 22, cysteine 52, and cysteine 55.

Belongs to the rubredoxin family. As to quaternary structure, monomer. Fe(3+) serves as cofactor.

Its function is as follows. Serves as an electron acceptor for pyruvate ferredoxin oxidoreductase (PFOR). The polypeptide is Rubredoxin-1 (rub1) (Chlorobaculum tepidum (strain ATCC 49652 / DSM 12025 / NBRC 103806 / TLS) (Chlorobium tepidum)).